A 514-amino-acid polypeptide reads, in one-letter code: Peptide chain release factor 3 (514 aa).

The region spanning 8–268 (KKRRTFAIIS…TFLEFAPEPH (261 aa)) is the tr-type G domain. Residues 17–24 (SHPDAGKT), 85–89 (DTPGH), and 139–142 (NKLD) each bind GTP.

Belongs to the TRAFAC class translation factor GTPase superfamily. Classic translation factor GTPase family. PrfC subfamily.

The protein resides in the cytoplasm. Its function is as follows. Increases the formation of ribosomal termination complexes and stimulates activities of RF-1 and RF-2. It binds guanine nucleotides and has strong preference for UGA stop codons. It may interact directly with the ribosome. The stimulation of RF-1 and RF-2 is significantly reduced by GTP and GDP, but not by GMP. This is Peptide chain release factor 3 from Streptococcus pyogenes serotype M49 (strain NZ131).